Reading from the N-terminus, the 973-residue chain is Splicing regulator ARVCF (973 aa).

The segment at 95-123 (VTVEEDPGTPTSHVSIVTSEDGTTRRTET) is disordered. Residues T103 and T105 each carry the phosphothreonine modification. A compositionally biased stretch (polar residues) spans 103–115 (TPTSHVSIVTSED). At R171 the chain carries Omega-N-methylarginine. 2 disordered regions span residues 233-254 (RREA…LPEH) and 267-331 (RSLA…QPER). At S268 the chain carries Phosphoserine. The span at 271–281 (ADDEGGPDLEP) shows a compositional bias: acidic residues. Basic and acidic residues predominate over residues 289-303 (RRPEYGRGLRARALE). A phosphoserine mark is found at S333, S336, S344, and S346. 6 ARM repeats span residues 349 to 388 (STRK…HLCF), 391 to 430 (EGIK…NLSY), 434 to 468 (ADNK…VTGT), 469 to 509 (LWNL…NEDS), 527 to 566 (LRNV…DTDN), and 576 to 623 (MRNL…GKKA). A disordered region spans residues 593-623 (YQEVEPGIPGSAATSQRRRKDDASCFGGKKA). S607 carries the post-translational modification Phosphoserine. The short motif at 608–624 (QRRRKDDASCFGGKKAK) is the Nuclear localization signal element. T637 carries the post-translational modification Phosphothreonine. ARM repeat units follow at residues 641 to 681 (PKRT…AAGA), 694 to 733 (TYIR…NLSL), 734 to 776 (DQRN…AVLN), and 777 to 821 (TIHE…SHVL). Residues 771–955 (VVAVLNTIHE…VLGPGAPPFC (185 aa)) form a required for interaction with RNA-binding proteins DDX5, HNRNPH2 and SRSF1 and with mRNAs region. The disordered stretch occupies residues 844–926 (FQSASTAKGP…KELLKGPGPA (83 aa)). S865 bears the Phosphoserine mark. Phosphothreonine is present on T866. Residues 872 to 881 (KNLDGEKSTT) show a composition bias toward basic and acidic residues.

This sequence belongs to the beta-catenin family. In terms of assembly, component of a ribonucleoprotein complex containing mRNAs and RNA-binding proteins including DDX5, HNRNPH2 and SRSF1 as well as ARVCF. Interacts (via the extreme C-terminus) with FRMPD2 (via the PDZ 2 domain). Interacts with CCDC85B. As to expression, expressed in optic nerve sheath envelope (at protein level). Expressed in heart (at protein level).

The protein resides in the cell junction. It is found in the adherens junction. It localises to the nucleus. Its subcellular location is the cytoplasm. In terms of biological role, contributes to the regulation of alternative splicing of pre-mRNAs. In Rattus norvegicus (Rat), this protein is Splicing regulator ARVCF.